Here is a 384-residue protein sequence, read N- to C-terminus: Inactive lipoate--protein ligase 2 (384 aa).

In terms of domain architecture, BPL/LPL catalytic spans 79–303 (NESKGNECIF…HIKHIINYKN (225 aa)).

It localises to the mitochondrion. Its subcellular location is the plastid. The protein localises to the apicoplast. Functionally, in the mitochondrion and together with LipL1, involved in the lipoylation of the E2 component of the branched chain alpha-ketoacid dehydrogenase complex BCKDH-E2/BCDH and the E2 component of the alpha -ketoglutarate dehydrogenase complex KDH. LipL1 is responsible for catalysing the activation of lipoate, forming lipoyl-AMP while LipL2 is required but is not capable of catalyzing this reaction. Although its role is unclear, it may catalyze the transfer of lipoyl groups from lipoyl-AMP to BCDH and KDH or act as an effector protein. The sequence is that of Inactive lipoate--protein ligase 2 from Plasmodium falciparum (isolate 3D7).